Reading from the N-terminus, the 360-residue chain is Squamosa promoter-binding-like protein 7 (360 aa).

Residues 74 to 89 (AQGSGGGGGGGGGGSA) are compositionally biased toward gly residues. The segment at 74–98 (AQGSGGGGGGGGGGSADQGKRKEKA) is disordered. An SBP-type zinc finger spans residues 105 to 182 (VPRCQVEGCD…AGHNERRRRS (78 aa)). Residues C108, C113, C130, H133, C149, C152, H156, and C168 each coordinate Zn(2+). The Bipartite nuclear localization signal motif lies at 165 to 181 (KKSCRRRLAGHNERRRR). Over residues 172–182 (LAGHNERRRRS) the composition is skewed to basic residues. 3 disordered regions span residues 172 to 196 (LAGHNERRRRSNASEAMARGSAHPH), 261 to 306 (FFSD…HENQ), and 318 to 360 (TTAA…ARVV).

As to expression, expressed in young panicles.

The protein localises to the nucleus. In terms of biological role, trans-acting factor that binds specifically to the consensus nucleotide sequence 5'-TNCGTACAA-3'. May be involved in panicle development. This is Squamosa promoter-binding-like protein 7 (SPL7) from Oryza sativa subsp. japonica (Rice).